The primary structure comprises 602 residues: Sulfite reductase [NADPH] hemoprotein beta-component (602 aa).

Residues 1–23 (MDDTKTASPAPARAYETPPAERP) are disordered. Residues cysteine 458, cysteine 464, cysteine 503, and cysteine 507 each coordinate [4Fe-4S] cluster. Siroheme is bound at residue cysteine 507.

The protein belongs to the nitrite and sulfite reductase 4Fe-4S domain family. Alpha(8)-beta(8). The alpha component is a flavoprotein, the beta component is a hemoprotein. The cofactor is siroheme. [4Fe-4S] cluster serves as cofactor.

The catalysed reaction is hydrogen sulfide + 3 NADP(+) + 3 H2O = sulfite + 3 NADPH + 4 H(+). Its pathway is sulfur metabolism; hydrogen sulfide biosynthesis; hydrogen sulfide from sulfite (NADPH route): step 1/1. Its function is as follows. Component of the sulfite reductase complex that catalyzes the 6-electron reduction of sulfite to sulfide. This is one of several activities required for the biosynthesis of L-cysteine from sulfate. This chain is Sulfite reductase [NADPH] hemoprotein beta-component, found in Methylobacterium sp. (strain 4-46).